The sequence spans 244 residues: 6-carboxyhexanoate--CoA ligase (244 aa).

This sequence belongs to the BioW family. Homodimer. It depends on Mg(2+) as a cofactor.

The catalysed reaction is heptanedioate + ATP + CoA = 6-carboxyhexanoyl-CoA + AMP + diphosphate. The protein operates within metabolic intermediate metabolism; pimeloyl-CoA biosynthesis; pimeloyl-CoA from pimelate: step 1/1. In terms of biological role, catalyzes the transformation of pimelate into pimeloyl-CoA with concomitant hydrolysis of ATP to AMP. This chain is 6-carboxyhexanoate--CoA ligase, found in Methanococcus maripaludis (strain C7 / ATCC BAA-1331).